We begin with the raw amino-acid sequence, 92 residues long: Small ribosomal subunit protein bS18A (92 aa).

The protein belongs to the bacterial ribosomal protein bS18 family. Part of the 30S ribosomal subunit. Forms a tight heterodimer with protein bS6.

Functionally, binds as a heterodimer with protein bS6 to the central domain of the 16S rRNA, where it helps stabilize the platform of the 30S subunit. The chain is Small ribosomal subunit protein bS18A from Cupriavidus pinatubonensis (strain JMP 134 / LMG 1197) (Cupriavidus necator (strain JMP 134)).